The sequence spans 476 residues: UDP-N-acetylmuramate--L-alanine ligase (476 aa).

Position 115–121 (115–121 (GTHGKTT)) interacts with ATP.

It belongs to the MurCDEF family.

The protein localises to the cytoplasm. It carries out the reaction UDP-N-acetyl-alpha-D-muramate + L-alanine + ATP = UDP-N-acetyl-alpha-D-muramoyl-L-alanine + ADP + phosphate + H(+). It participates in cell wall biogenesis; peptidoglycan biosynthesis. In terms of biological role, cell wall formation. The sequence is that of UDP-N-acetylmuramate--L-alanine ligase from Paramagnetospirillum magneticum (strain ATCC 700264 / AMB-1) (Magnetospirillum magneticum).